Here is an 85-residue protein sequence, read N- to C-terminus: Neurotoxin 60.35 (85 aa).

The signal sequence occupies residues 1 to 23 (MKFCVAVSLLIIASMAGVISVSG). The region spanning 24–85 (YDVYPRDYAG…NFLSVIWKQC (62 aa)) is the LCN-type CS-alpha/beta domain. 3 disulfide bridges follow: cysteine 38–cysteine 60, cysteine 46–cysteine 65, and cysteine 50–cysteine 67.

The protein belongs to the long (3 C-C) scorpion toxin superfamily. As to expression, expressed by the venom gland.

Its subcellular location is the secreted. The chain is Neurotoxin 60.35 from Lychas mucronatus (Chinese swimming scorpion).